The chain runs to 579 residues: Peptidoglycan D,D-transpeptidase FtsI (579 aa).

The helical transmembrane segment at 15-35 (FCVIVGLLLAMVGAIVWRIVD) threads the bilayer. Residue Ser294 is the Acyl-ester intermediate of the active site. The segment at 558–579 (DNLPTATEQQQVNAAPAKGGRG) is disordered. Polar residues predominate over residues 561–570 (PTATEQQQVN).

The protein belongs to the transpeptidase family. FtsI subfamily.

Its subcellular location is the cell inner membrane. The catalysed reaction is Preferential cleavage: (Ac)2-L-Lys-D-Ala-|-D-Ala. Also transpeptidation of peptidyl-alanyl moieties that are N-acyl substituents of D-alanine.. Its pathway is cell wall biogenesis; peptidoglycan biosynthesis. In terms of biological role, catalyzes cross-linking of the peptidoglycan cell wall at the division septum. Binds penicillin. This chain is Peptidoglycan D,D-transpeptidase FtsI, found in Pseudomonas aeruginosa (strain ATCC 15692 / DSM 22644 / CIP 104116 / JCM 14847 / LMG 12228 / 1C / PRS 101 / PAO1).